The primary structure comprises 311 residues: tRNA-cytidine(32) 2-sulfurtransferase (311 aa).

Residues 47–52 carry the PP-loop motif motif; sequence SGGKDS. [4Fe-4S] cluster-binding residues include cysteine 122, cysteine 125, and cysteine 213.

The protein belongs to the TtcA family. Homodimer. The cofactor is Mg(2+). It depends on [4Fe-4S] cluster as a cofactor.

The protein localises to the cytoplasm. The catalysed reaction is cytidine(32) in tRNA + S-sulfanyl-L-cysteinyl-[cysteine desulfurase] + AH2 + ATP = 2-thiocytidine(32) in tRNA + L-cysteinyl-[cysteine desulfurase] + A + AMP + diphosphate + H(+). It functions in the pathway tRNA modification. In terms of biological role, catalyzes the ATP-dependent 2-thiolation of cytidine in position 32 of tRNA, to form 2-thiocytidine (s(2)C32). The sulfur atoms are provided by the cysteine/cysteine desulfurase (IscS) system. The sequence is that of tRNA-cytidine(32) 2-sulfurtransferase from Salmonella dublin (strain CT_02021853).